Here is a 77-residue protein sequence, read N- to C-terminus: Small ribosomal subunit protein bS21 (77 aa).

Over residues 38-52 (KPSEKRAREKAEAIR) the composition is skewed to basic and acidic residues. The tract at residues 38–77 (KPSEKRAREKAEAIRRTRKLARKRAQREGIVSNGRTASVR) is disordered. Residues 53 to 62 (RTRKLARKRA) show a composition bias toward basic residues.

This sequence belongs to the bacterial ribosomal protein bS21 family.

The chain is Small ribosomal subunit protein bS21 from Bartonella bacilliformis (strain ATCC 35685 / KC583 / Herrer 020/F12,63).